Consider the following 538-residue polypeptide: Putative cysteine ligase BshC (538 aa).

A coiled-coil region spans residues 460 to 483; that stretch reads KINEQIELLEKMLKRNVEKKHEVQ.

The protein belongs to the BshC family.

Functionally, involved in bacillithiol (BSH) biosynthesis. May catalyze the last step of the pathway, the addition of cysteine to glucosamine malate (GlcN-Mal) to generate BSH. The chain is Putative cysteine ligase BshC from Bacillus mycoides (strain KBAB4) (Bacillus weihenstephanensis).